We begin with the raw amino-acid sequence, 551 residues long: Arginine--tRNA ligase (551 aa).

A 'HIGH' region motif is present at residues 123 to 133 (ANPTGPLTIGR).

Belongs to the class-I aminoacyl-tRNA synthetase family. As to quaternary structure, monomer.

Its subcellular location is the cytoplasm. The catalysed reaction is tRNA(Arg) + L-arginine + ATP = L-arginyl-tRNA(Arg) + AMP + diphosphate. The polypeptide is Arginine--tRNA ligase (Chlorobium limicola (strain DSM 245 / NBRC 103803 / 6330)).